The sequence spans 208 residues: Outer-membrane lipoprotein carrier protein (208 aa).

The first 22 residues, 1–22 (MKKIFAIAALSLPLFSHFPAFA), serve as a signal peptide directing secretion.

This sequence belongs to the LolA family. As to quaternary structure, monomer.

It localises to the periplasm. Participates in the translocation of lipoproteins from the inner membrane to the outer membrane. Only forms a complex with a lipoprotein if the residue after the N-terminal Cys is not an aspartate (The Asp acts as a targeting signal to indicate that the lipoprotein should stay in the inner membrane). The sequence is that of Outer-membrane lipoprotein carrier protein from Shewanella halifaxensis (strain HAW-EB4).